We begin with the raw amino-acid sequence, 646 residues long: ATP-dependent zinc metalloprotease FtsH (646 aa).

Over 1 to 4 the chain is Cytoplasmic; sequence MTRS. The chain crosses the membrane as a helical span at residues 5 to 25; that stretch reads LLWQMVIVLGAILMVNYVLTT. Topologically, residues 26-120 are periplasmic; it reads LTPQTQEPVV…VRPESKPSPW (95 aa). A helical transmembrane segment spans residues 121 to 141; it reads ATAMIYMLPWLLIVGVWWFVI. Over 142-646 the chain is Cytoplasmic; that stretch reads KGMRTRQGPG…GELAGGAVEG (505 aa). 216–223 contacts ATP; the sequence is GPPGTGKT. His437 is a Zn(2+) binding site. The active site involves Glu438. 2 residues coordinate Zn(2+): His441 and Asp513.

This sequence in the central section; belongs to the AAA ATPase family. The protein in the C-terminal section; belongs to the peptidase M41 family. Homohexamer. Zn(2+) is required as a cofactor.

It is found in the cell inner membrane. Acts as a processive, ATP-dependent zinc metallopeptidase for both cytoplasmic and membrane proteins. Plays a role in the quality control of integral membrane proteins. The protein is ATP-dependent zinc metalloprotease FtsH of Syntrophotalea carbinolica (strain DSM 2380 / NBRC 103641 / GraBd1) (Pelobacter carbinolicus).